The chain runs to 1088 residues: RNA-directed RNA polymerase (1088 aa).

A RdRp catalytic domain is found at 501 to 687 (LSYGDVTRFL…AKRYIAGGKI (187 aa)).

The protein belongs to the reoviridae RNA-directed RNA polymerase family. As to quaternary structure, interacts with VP3 (Potential). Interacts with VP2; this interaction activates VP1. Interacts with NSP5; this interaction is probably necessary for the formation of functional virus factories. Interacts with NSP2; this interaction is weak. Requires Mg(2+) as cofactor.

It localises to the virion. It carries out the reaction RNA(n) + a ribonucleoside 5'-triphosphate = RNA(n+1) + diphosphate. RNA-directed RNA polymerase that is involved in both transcription and genome replication. Together with VP3 capping enzyme, forms an enzyme complex positioned near the channels situated at each of the five-fold vertices of the core. Following infection, the outermost layer of the virus is lost, leaving a double-layered particle (DLP) made up of the core and VP6 shell. VP1 then catalyzes the transcription of fully conservative plus-strand genomic RNAs that are extruded through the DLP's channels into the cytoplasm where they function as mRNAs for translation of viral proteins. One copy of each of the viral (+)RNAs is also recruited during core assembly, together with newly synthesized polymerase complexes and VP2. The polymerase of these novo-formed particles catalyzes the synthesis of complementary minus-strands leading to dsRNA formation. To do so, the polymerase specifically recognizes and binds 4 bases 5'-UGUG-3' in the conserved 3'-sequence of plus-strand RNA templates. VP2 presumably activates the autoinhibited VP1-RNA complex to coordinate packaging and genome replication. Once dsRNA synthesis is complete, the polymerase switches to the transcriptional mode, thus providing secondary transcription. In Homo sapiens (Human), this protein is RNA-directed RNA polymerase.